A 497-amino-acid chain; its full sequence is Probable cytosol aminopeptidase (497 aa).

Mn(2+) contacts are provided by Lys-267 and Asp-272. Lys-279 is a catalytic residue. 3 residues coordinate Mn(2+): Asp-290, Asp-349, and Glu-351. The active site involves Arg-353.

It belongs to the peptidase M17 family. The cofactor is Mn(2+).

It is found in the cytoplasm. The enzyme catalyses Release of an N-terminal amino acid, Xaa-|-Yaa-, in which Xaa is preferably Leu, but may be other amino acids including Pro although not Arg or Lys, and Yaa may be Pro. Amino acid amides and methyl esters are also readily hydrolyzed, but rates on arylamides are exceedingly low.. It carries out the reaction Release of an N-terminal amino acid, preferentially leucine, but not glutamic or aspartic acids.. Functionally, presumably involved in the processing and regular turnover of intracellular proteins. Catalyzes the removal of unsubstituted N-terminal amino acids from various peptides. This is Probable cytosol aminopeptidase from Pseudomonas putida (strain W619).